The chain runs to 526 residues: Dolichyl pyrophosphate Glc1Man9GlcNAc2 alpha-1,3-glucosyltransferase (526 aa).

Helical transmembrane passes span 4–24 (FGIA…VTLL), 103–122 (LLFQ…YAVH), 143–163 (FILS…HIHF), 188–208 (GAFL…VAPA), 238–258 (LISL…PFLA), 334–354 (PLAT…CLWC), 368–388 (LCAL…ILLA), 389–409 (VLPM…FLIL), 427–449 (LPIK…KTLF), 461–481 (TFYL…FPFT), and 488–508 (PFIP…YAWL).

The protein belongs to the ALG6/ALG8 glucosyltransferase family.

The protein localises to the endoplasmic reticulum membrane. The catalysed reaction is an alpha-D-Glc-(1-&gt;3)-alpha-D-Man-(1-&gt;2)-alpha-D-Man-(1-&gt;2)-alpha-D-Man-(1-&gt;3)-[alpha-D-Man-(1-&gt;2)-alpha-D-Man-(1-&gt;3)-[alpha-D-Man-(1-&gt;2)-alpha-D-Man-(1-&gt;6)]-alpha-D-Man-(1-&gt;6)]-beta-D-Man-(1-&gt;4)-beta-D-GlcNAc-(1-&gt;4)-alpha-D-GlcNAc-diphospho-di-trans,poly-cis-dolichol + a di-trans,poly-cis-dolichyl beta-D-glucosyl phosphate = an alpha-D-Glc-(1-&gt;3)-alpha-D-Glc-(1-&gt;3)-alpha-D-Man-(1-&gt;2)-alpha-D-Man-(1-&gt;2)-alpha-D-Man-(1-&gt;3)-[alpha-D-Man-(1-&gt;2)-alpha-D-Man-(1-&gt;3)-[alpha-D-Man-(1-&gt;2)-alpha-D-Man-(1-&gt;6)]-alpha-D-Man-(1-&gt;6)]-beta-D-Man-(1-&gt;4)-beta-D-GlcNAc-(1-&gt;4)-alpha-D-GlcNAc-diphospho-di-trans,poly-cis-dolichol + a di-trans,poly-cis-dolichyl phosphate + H(+). It functions in the pathway protein modification; protein glycosylation. Its function is as follows. Dolichyl pyrophosphate Glc1Man9GlcNAc2 alpha-1,3-glucosyltransferase that operates in the biosynthetic pathway of dolichol-linked oligosaccharides, the glycan precursors employed in protein asparagine (N)-glycosylation. The assembly of dolichol-linked oligosaccharides begins on the cytosolic side of the endoplasmic reticulum membrane and finishes in its lumen. The sequential addition of sugars to dolichol pyrophosphate produces dolichol-linked oligosaccharides containing fourteen sugars, including two GlcNAcs, nine mannoses and three glucoses. Once assembled, the oligosaccharide is transferred from the lipid to nascent proteins by oligosaccharyltransferases. In the lumen of the endoplasmic reticulum, adds the second glucose residue from dolichyl phosphate glucose (Dol-P-Glc) onto the lipid-linked oligosaccharide intermediate Glc(1)Man(9)GlcNAc(2)-PP-Dol to produce Glc(2)Man(9)GlcNAc(2)-PP-Dol. Glc(2)Man(9)GlcNAc(2)-PP-Dol is a substrate for ALG10, the following enzyme in the biosynthetic pathway. Required for PKD1/Polycystin-1 maturation and localization to the plasma membrane of the primary cilia. The sequence is that of Dolichyl pyrophosphate Glc1Man9GlcNAc2 alpha-1,3-glucosyltransferase from Bos taurus (Bovine).